We begin with the raw amino-acid sequence, 140 residues long: MAKQAGKGVEEFRPYVTKVIPVGANIVCADNSGAKILEVINVPRHRTRASRLPSASVGDFCNVVVKKGPAELRKQVYGAVIIRQKYPVRRLNGVRVCFEDNAAVLITPEGETKGTDIKGPVAAEASEKWPRVANLASMVV.

Belongs to the universal ribosomal protein uL14 family. In terms of assembly, part of the 50S ribosomal subunit. Forms a cluster with proteins L3 and L24e, part of which may contact the 16S rRNA in 2 intersubunit bridges.

Binds to 23S rRNA. Forms part of two intersubunit bridges in the 70S ribosome. This Nitrosopumilus maritimus (strain SCM1) protein is Large ribosomal subunit protein uL14.